The sequence spans 280 residues: Chemotaxis protein methyltransferase 2 (280 aa).

The CheR-type methyltransferase domain occupies 10–280; that stretch reads FGNQEFHYTR…SVGQTVYSPA (271 aa). Residues N85, T87, R91, E125, D150, 208-209, and 226-227 contribute to the S-adenosyl-L-methionine site; these read NL and RN.

As to quaternary structure, interacts with the C-terminal pentapeptide GWEEF of the methyl-accepting chemotaxis protein McpB.

The catalysed reaction is L-glutamyl-[protein] + S-adenosyl-L-methionine = [protein]-L-glutamate 5-O-methyl ester + S-adenosyl-L-homocysteine. Functionally, methylation of the methyl-accepting chemotaxis proteins (MCP) to form gamma-glutamyl methyl ester residues in MCP. It specifically targets the McpB chemoreceptor. In Pseudomonas aeruginosa (strain ATCC 15692 / DSM 22644 / CIP 104116 / JCM 14847 / LMG 12228 / 1C / PRS 101 / PAO1), this protein is Chemotaxis protein methyltransferase 2.